Reading from the N-terminus, the 267-residue chain is tRNA pseudouridine synthase A (267 aa).

The Nucleophile role is filled by D51. Y109 is a binding site for substrate.

The protein belongs to the tRNA pseudouridine synthase TruA family. In terms of assembly, homodimer.

It carries out the reaction uridine(38/39/40) in tRNA = pseudouridine(38/39/40) in tRNA. Functionally, formation of pseudouridine at positions 38, 39 and 40 in the anticodon stem and loop of transfer RNAs. In Staphylococcus aureus (strain MSSA476), this protein is tRNA pseudouridine synthase A.